The following is a 241-amino-acid chain: 1-(5-phosphoribosyl)-5-[(5-phosphoribosylamino)methylideneamino] imidazole-4-carboxamide isomerase (241 aa).

The active-site Proton acceptor is the D8. D130 acts as the Proton donor in catalysis.

This sequence belongs to the HisA/HisF family.

It is found in the cytoplasm. The catalysed reaction is 1-(5-phospho-beta-D-ribosyl)-5-[(5-phospho-beta-D-ribosylamino)methylideneamino]imidazole-4-carboxamide = 5-[(5-phospho-1-deoxy-D-ribulos-1-ylimino)methylamino]-1-(5-phospho-beta-D-ribosyl)imidazole-4-carboxamide. The protein operates within amino-acid biosynthesis; L-histidine biosynthesis; L-histidine from 5-phospho-alpha-D-ribose 1-diphosphate: step 4/9. The sequence is that of 1-(5-phosphoribosyl)-5-[(5-phosphoribosylamino)methylideneamino] imidazole-4-carboxamide isomerase from Leptospira borgpetersenii serovar Hardjo-bovis (strain L550).